Reading from the N-terminus, the 205-residue chain is Small ribosomal subunit protein uS5 (205 aa).

The region spanning 49-112 is the S5 DRBM domain; that stretch reads LVDEVLDINM…VSAKINLVKV (64 aa).

The protein belongs to the universal ribosomal protein uS5 family. In terms of assembly, part of the 30S ribosomal subunit. Contacts protein S4.

With S4 and S12 plays an important role in translational accuracy. The sequence is that of Small ribosomal subunit protein uS5 from Methanospirillum hungatei JF-1 (strain ATCC 27890 / DSM 864 / NBRC 100397 / JF-1).